A 427-amino-acid polypeptide reads, in one-letter code: Trigger factor (427 aa).

Positions 163-248 (GDTVVIDFVG…IHEVKTKEVP (86 aa)) constitute a PPIase FKBP-type domain.

It belongs to the FKBP-type PPIase family. Tig subfamily.

It is found in the cytoplasm. It catalyses the reaction [protein]-peptidylproline (omega=180) = [protein]-peptidylproline (omega=0). Involved in protein export. Acts as a chaperone by maintaining the newly synthesized protein in an open conformation. Functions as a peptidyl-prolyl cis-trans isomerase. This is Trigger factor from Streptococcus pyogenes serotype M18 (strain MGAS8232).